The primary structure comprises 233 residues: Large ribosomal subunit protein uL1 (233 aa).

It belongs to the universal ribosomal protein uL1 family. In terms of assembly, part of the 50S ribosomal subunit.

Functionally, binds directly to 23S rRNA. The L1 stalk is quite mobile in the ribosome, and is involved in E site tRNA release. Its function is as follows. Protein L1 is also a translational repressor protein, it controls the translation of the L11 operon by binding to its mRNA. The sequence is that of Large ribosomal subunit protein uL1 from Photorhabdus laumondii subsp. laumondii (strain DSM 15139 / CIP 105565 / TT01) (Photorhabdus luminescens subsp. laumondii).